The following is a 151-amino-acid chain: Phosphoribosyl-AMP cyclohydrolase (151 aa).

D94 contributes to the Mg(2+) binding site. C95 contributes to the Zn(2+) binding site. Residues D96 and D98 each contribute to the Mg(2+) site. Zn(2+) is bound by residues C112 and C119.

This sequence belongs to the PRA-CH family. As to quaternary structure, homodimer. Mg(2+) is required as a cofactor. It depends on Zn(2+) as a cofactor.

The protein localises to the cytoplasm. It catalyses the reaction 1-(5-phospho-beta-D-ribosyl)-5'-AMP + H2O = 1-(5-phospho-beta-D-ribosyl)-5-[(5-phospho-beta-D-ribosylamino)methylideneamino]imidazole-4-carboxamide. Its pathway is amino-acid biosynthesis; L-histidine biosynthesis; L-histidine from 5-phospho-alpha-D-ribose 1-diphosphate: step 3/9. Its function is as follows. Catalyzes the hydrolysis of the adenine ring of phosphoribosyl-AMP. This is Phosphoribosyl-AMP cyclohydrolase from Rhodopseudomonas palustris (strain TIE-1).